We begin with the raw amino-acid sequence, 164 residues long: Ribosome maturation factor RimP (164 aa).

Belongs to the RimP family.

The protein localises to the cytoplasm. In terms of biological role, required for maturation of 30S ribosomal subunits. The protein is Ribosome maturation factor RimP of Mesoplasma florum (strain ATCC 33453 / NBRC 100688 / NCTC 11704 / L1) (Acholeplasma florum).